Reading from the N-terminus, the 123-residue chain is Small ribosomal subunit protein uS13 (123 aa).

The interval 89 to 123 is disordered; the sequence is GRRHRSGLPVRGQRTRTNARTRKGKRKAVAKKKAK. Residues 101-123 show a composition bias toward basic residues; that stretch reads QRTRTNARTRKGKRKAVAKKKAK.

The protein belongs to the universal ribosomal protein uS13 family. Part of the 30S ribosomal subunit. Forms a loose heterodimer with protein S19. Forms two bridges to the 50S subunit in the 70S ribosome.

Functionally, located at the top of the head of the 30S subunit, it contacts several helices of the 16S rRNA. In the 70S ribosome it contacts the 23S rRNA (bridge B1a) and protein L5 of the 50S subunit (bridge B1b), connecting the 2 subunits; these bridges are implicated in subunit movement. Contacts the tRNAs in the A and P-sites. This chain is Small ribosomal subunit protein uS13, found in Cutibacterium acnes (strain DSM 16379 / KPA171202) (Propionibacterium acnes).